Consider the following 236-residue polypeptide: Probable metal transport system ATP-binding protein TC_0697 (236 aa).

Residues 5-236 form the ABC transporter domain; it reads LILENVSFRY…FCCNTFGKCS (232 aa). An ATP-binding site is contributed by 39–46; sequence GPNGGGKT.

Belongs to the ABC transporter superfamily.

It is found in the cell inner membrane. In terms of biological role, part of an ATP-driven transport system TC_0696/TC_0697/TC_0698 for a metal. Probably responsible for energy coupling to the transport system. In Chlamydia muridarum (strain MoPn / Nigg), this protein is Probable metal transport system ATP-binding protein TC_0697.